A 290-amino-acid chain; its full sequence is Translin-associated protein X (290 aa).

The interval 1-31 (MNGKEGPGGFRKRKHDTFPHNQRREGKDASL) is disordered. The segment covering 16–28 (DTFPHNQRREGKD) has biased composition (basic and acidic residues). Positions 73–208 (LLHRITSAPD…MRMCINSVGN (136 aa)) are interaction with C1D. Positions 129 and 197 each coordinate Mg(2+). K279 participates in a covalent cross-link: Glycyl lysine isopeptide (Lys-Gly) (interchain with G-Cter in SUMO2).

It belongs to the translin family. In terms of assembly, ring-shaped heterooctamer of six TSN and two TSNAX subunits. Interacts with GOLGA3, TSNAXIP1, SUN1 and AKAP9. Interacts with the homodimeric form of C1D following gamma-radiation. Interacts with TSN and C1D in a mutually exclusive manner. Sumoylated with SUMO1. As to expression, detected in heart, brain, lung, liver, kidney and testis.

It localises to the cytoplasm. The protein resides in the perinuclear region. Its subcellular location is the golgi apparatus. It is found in the nucleus. Acts in combination with TSN as an endonuclease involved in the activation of the RNA-induced silencing complex (RISC). Possible role in spermatogenesis. This Mus musculus (Mouse) protein is Translin-associated protein X (Tsnax).